Consider the following 203-residue polypeptide: Glycerol-3-phosphate acyltransferase (203 aa).

5 helical membrane-spanning segments follow: residues 4–24, 56–76, 80–100, 115–135, and 149–169; these read IAYLLILGAYLLGSISSAVIF, LGVLMADILKGMLPVSLGFYL, ISVIGFIALAACLGHIFPVFF, IIPMGYSVAGLAVGTWLFVFL, and LIVPLYIWWFSSELTFPVALV.

This sequence belongs to the PlsY family. In terms of assembly, probably interacts with PlsX.

It localises to the cell inner membrane. It carries out the reaction an acyl phosphate + sn-glycerol 3-phosphate = a 1-acyl-sn-glycero-3-phosphate + phosphate. It functions in the pathway lipid metabolism; phospholipid metabolism. Its function is as follows. Catalyzes the transfer of an acyl group from acyl-phosphate (acyl-PO(4)) to glycerol-3-phosphate (G3P) to form lysophosphatidic acid (LPA). This enzyme utilizes acyl-phosphate as fatty acyl donor, but not acyl-CoA or acyl-ACP. The sequence is that of Glycerol-3-phosphate acyltransferase from Glaesserella parasuis serovar 5 (strain SH0165) (Haemophilus parasuis).